Consider the following 123-residue polypeptide: Immunoglobulin heavy variable 4-34 (123 aa).

Positions 1–26 are cleaved as a signal peptide; that stretch reads MDLLHKNMKHLWFFLLLVAAPRWVLS. Residues 26 to 123 form a v region region; it reads SQVQLQQWGA…ADTAVYYCAR (98 aa). Positions 27–51 are framework-1; sequence QVQLQQWGAGLLKPSETLSLTCAVY. Residues 27–123 enclose the Ig-like domain; the sequence is QVQLQQWGAG…ADTAVYYCAR (97 aa). A disulfide bridge links Cys-48 with Cys-121. The complementarity-determining-1 stretch occupies residues 52 to 59; the sequence is GGSFSGYY. The tract at residues 60 to 76 is framework-2; that stretch reads WSWIRQPPGKGLEWIGE. A complementarity-determining-2 region spans residues 77-83; that stretch reads INHSGST. Asn-78 carries an N-linked (GlcNAc...) asparagine glycan. A framework-3 region spans residues 84-121; that stretch reads NYNPSLKSRVTISVDTSKNQFSLKLSSVTAADTAVYYC. Residues 122 to 123 are complementarity-determining-3; it reads AR.

In terms of assembly, immunoglobulins are composed of two identical heavy chains and two identical light chains; disulfide-linked.

The protein localises to the secreted. It is found in the cell membrane. Functionally, v region of the variable domain of immunoglobulin heavy chains that participates in the antigen recognition. Immunoglobulins, also known as antibodies, are membrane-bound or secreted glycoproteins produced by B lymphocytes. In the recognition phase of humoral immunity, the membrane-bound immunoglobulins serve as receptors which, upon binding of a specific antigen, trigger the clonal expansion and differentiation of B lymphocytes into immunoglobulins-secreting plasma cells. Secreted immunoglobulins mediate the effector phase of humoral immunity, which results in the elimination of bound antigens. The antigen binding site is formed by the variable domain of one heavy chain, together with that of its associated light chain. Thus, each immunoglobulin has two antigen binding sites with remarkable affinity for a particular antigen. The variable domains are assembled by a process called V-(D)-J rearrangement and can then be subjected to somatic hypermutations which, after exposure to antigen and selection, allow affinity maturation for a particular antigen. This Homo sapiens (Human) protein is Immunoglobulin heavy variable 4-34.